Consider the following 458-residue polypeptide: Bifunctional protein GlmU (458 aa).

Residues 1 to 231 (MSNRALSVVV…QTEVEGVNNR (231 aa)) form a pyrophosphorylase region. UDP-N-acetyl-alpha-D-glucosamine is bound by residues 11–14 (LAAG), Lys-25, Gln-78, 83–84 (GT), 105–107 (YGD), Gly-142, Glu-156, Asn-171, and Asn-229. Residue Asp-107 coordinates Mg(2+). Asn-229 contributes to the Mg(2+) binding site. Residues 232–252 (LQLARLERLFQREQAERLLLA) are linker. The interval 253 to 458 (GVMLSDPDRF…ANWTRPVKKK (206 aa)) is N-acetyltransferase. UDP-N-acetyl-alpha-D-glucosamine contacts are provided by Arg-335 and Lys-353. Catalysis depends on His-365, which acts as the Proton acceptor. UDP-N-acetyl-alpha-D-glucosamine contacts are provided by Tyr-368 and Asn-379. Residues Ala-382, 388–389 (NY), Ser-407, Ala-425, and Arg-442 contribute to the acetyl-CoA site.

In the N-terminal section; belongs to the N-acetylglucosamine-1-phosphate uridyltransferase family. It in the C-terminal section; belongs to the transferase hexapeptide repeat family. In terms of assembly, homotrimer. Mg(2+) is required as a cofactor.

The protein localises to the cytoplasm. The enzyme catalyses alpha-D-glucosamine 1-phosphate + acetyl-CoA = N-acetyl-alpha-D-glucosamine 1-phosphate + CoA + H(+). It carries out the reaction N-acetyl-alpha-D-glucosamine 1-phosphate + UTP + H(+) = UDP-N-acetyl-alpha-D-glucosamine + diphosphate. It functions in the pathway nucleotide-sugar biosynthesis; UDP-N-acetyl-alpha-D-glucosamine biosynthesis; N-acetyl-alpha-D-glucosamine 1-phosphate from alpha-D-glucosamine 6-phosphate (route II): step 2/2. It participates in nucleotide-sugar biosynthesis; UDP-N-acetyl-alpha-D-glucosamine biosynthesis; UDP-N-acetyl-alpha-D-glucosamine from N-acetyl-alpha-D-glucosamine 1-phosphate: step 1/1. The protein operates within bacterial outer membrane biogenesis; LPS lipid A biosynthesis. Functionally, catalyzes the last two sequential reactions in the de novo biosynthetic pathway for UDP-N-acetylglucosamine (UDP-GlcNAc). The C-terminal domain catalyzes the transfer of acetyl group from acetyl coenzyme A to glucosamine-1-phosphate (GlcN-1-P) to produce N-acetylglucosamine-1-phosphate (GlcNAc-1-P), which is converted into UDP-GlcNAc by the transfer of uridine 5-monophosphate (from uridine 5-triphosphate), a reaction catalyzed by the N-terminal domain. This chain is Bifunctional protein GlmU, found in Sodalis glossinidius (strain morsitans).